The following is a 480-amino-acid chain: ATP synthase subunit beta (480 aa).

166–173 is a binding site for ATP; the sequence is GGAGVGKT.

This sequence belongs to the ATPase alpha/beta chains family. F-type ATPases have 2 components, CF(1) - the catalytic core - and CF(0) - the membrane proton channel. CF(1) has five subunits: alpha(3), beta(3), gamma(1), delta(1), epsilon(1). CF(0) has three main subunits: a(1), b(2) and c(9-12). The alpha and beta chains form an alternating ring which encloses part of the gamma chain. CF(1) is attached to CF(0) by a central stalk formed by the gamma and epsilon chains, while a peripheral stalk is formed by the delta and b chains.

The protein resides in the cell membrane. The catalysed reaction is ATP + H2O + 4 H(+)(in) = ADP + phosphate + 5 H(+)(out). In terms of biological role, produces ATP from ADP in the presence of a proton gradient across the membrane. The catalytic sites are hosted primarily by the beta subunits. The sequence is that of ATP synthase subunit beta from Streptomyces griseus subsp. griseus (strain JCM 4626 / CBS 651.72 / NBRC 13350 / KCC S-0626 / ISP 5235).